The following is a 320-amino-acid chain: MRQTKTGILLANLGTPDAPTPEAVKRYLKQFLSDRRVVDTSRLLWWPLLRGVILPLRSPRVAKLYASVWMEGGSPLMVYSRQQQQALAQRLPETPVALGMSYGSPSLESAVDELLAEHVDHIVVLPLYPQYSCSTVGAVWDELARILARKRSIPGISFIRDYADNHDYINALANSVRASFAKHGEPDLLLLSYHGIPQRYADEGDDYPQHCRTTTRELASALEMAPEKVMMTFQSRFGREPWLMPYTDETLKMLGEKGVGHIQVMCPGFAADCLETLEEIAEQNREVFLGAGGKKYEYIPALNATPEHIEMMANLVAAYR.

Fe cation is bound by residues His-194 and Glu-275.

It belongs to the ferrochelatase family. Monomer.

The protein localises to the cytoplasm. The catalysed reaction is heme b + 2 H(+) = protoporphyrin IX + Fe(2+). It participates in porphyrin-containing compound metabolism; protoheme biosynthesis; protoheme from protoporphyrin-IX: step 1/1. Catalyzes the ferrous insertion into protoporphyrin IX. This chain is Ferrochelatase, found in Escherichia coli (strain SMS-3-5 / SECEC).